The chain runs to 372 residues: MPLIDLPDFAGDLIAEFAARRTDRVDTPIIQPAEPFLDMAGEDLRRRIFLTESETGASLCLRPEFTIPVCLQHIETATGTPKRYSYLGEIFRQRREGGQEFYQAGIEDLGDRDIASADARAVGDAIAILNRLVPGKALSVTLGDQAVFEAVVQALGLPSGWQKRLIHAFGNMMQLETLLARLASPQPVTGLDPHALDFLTRGDEQGLVMHIDSTMQATGYSTNASRSPLEIARRLREKLVLSETRLDDEAFRVLEEFLSLSVPLADASSALAGFADAAGLKLGTALERFDARVAALANAGVDAGSIDYRAAFGRPLDYYTGLVFEVTMEGSAAVLVGGGRFDRLLTLLGAKDHIPAVGFALWLDRIETARAA.

The protein belongs to the class-II aminoacyl-tRNA synthetase family. HisZ subfamily. As to quaternary structure, heteromultimer composed of HisG and HisZ subunits.

The protein localises to the cytoplasm. Its pathway is amino-acid biosynthesis; L-histidine biosynthesis; L-histidine from 5-phospho-alpha-D-ribose 1-diphosphate: step 1/9. In terms of biological role, required for the first step of histidine biosynthesis. May allow the feedback regulation of ATP phosphoribosyltransferase activity by histidine. This chain is ATP phosphoribosyltransferase regulatory subunit, found in Rhizobium rhizogenes (strain K84 / ATCC BAA-868) (Agrobacterium radiobacter).